A 309-amino-acid chain; its full sequence is Polyprenal reductase (309 aa).

The Cytoplasmic segment spans residues 1-3 (MFH). Residues 4–24 (ILSIVNIIWLLLALCFGAAFC) traverse the membrane as a helical segment. Topologically, residues 25–67 (LNKFSVKLPNRVEHVFQDFIRYGKTKENIKRASWQLVFDLSKR) are lumenal. Residues 68–88 (YFYHFYVVSVMWNGLLLLFSI) form a helical membrane-spanning segment. The Cytoplasmic portion of the chain corresponds to 89 to 114 (RSVVMSEAFPDWIIDVLGSLTGRSRG). Residues 115–135 (AWNEIHLSTLLLQVLLWVHTL) traverse the membrane as a helical segment. Over 136–150 (RRLLECLFVSVFSDG) the chain is Lumenal. A helical transmembrane segment spans residues 151–171 (VINVVQYAFGLSYYIILGLTV). Residues 172 to 185 (LCTNDSLPQSESVS) are Cytoplasmic-facing. The chain crosses the membrane as a helical span at residues 186-206 (FFNQLTWYHVVGTLLFFWASF). Residues 207 to 255 (LQHQSLSLLAKMRTDSSGKVETLAHKMPCGGWFELVSCPHYLAELLIYA) lie on the Lumenal side of the membrane. Residues 256 to 276 (AMCVCCGCASLTWWMVVLYVL) form a helical membrane-spanning segment. The Cytoplasmic segment spans residues 277 to 309 (CNQALAAQLCHEYYRSKFKTYPHHRKAFIPFVL).

The protein belongs to the steroid 5-alpha reductase family. Polyprenal reductase subfamily.

It localises to the endoplasmic reticulum membrane. The catalysed reaction is a di-trans,poly-cis-dolichal + NADP(+) = a di-trans,poly-cis-polyprenal + NADPH + H(+). It catalyses the reaction a 3-oxo-5alpha-steroid + NADP(+) = a 3-oxo-Delta(4)-steroid + NADPH + H(+). The enzyme catalyses androst-4-ene-3,17-dione + NADPH + H(+) = 5alpha-androstan-3,17-dione + NADP(+). It carries out the reaction 17beta-hydroxy-5alpha-androstan-3-one + NADP(+) = testosterone + NADPH + H(+). It functions in the pathway protein modification; protein glycosylation. Plays a key role in early steps of protein N-linked glycosylation by being involved in the conversion of polyprenol into dolichol. Acts as a polyprenal reductase that mediates the reduction of polyprenal into dolichal in a NADP-dependent mechanism. Dolichols are required for the synthesis of dolichol-linked monosaccharides and the oligosaccharide precursor used for N-glycosylation. Also able to convert testosterone (T) into 5-alpha-dihydrotestosterone (DHT). The protein is Polyprenal reductase (srd5a3) of Danio rerio (Zebrafish).